Consider the following 178-residue polypeptide: Ribosome maturation factor RimM (178 aa).

The 81-residue stretch at 98-178 (DGEYYWNQLE…RILVDWDPEF (81 aa)) folds into the PRC barrel domain.

The protein belongs to the RimM family. As to quaternary structure, binds ribosomal protein uS19.

Its subcellular location is the cytoplasm. Functionally, an accessory protein needed during the final step in the assembly of 30S ribosomal subunit, possibly for assembly of the head region. Essential for efficient processing of 16S rRNA. May be needed both before and after RbfA during the maturation of 16S rRNA. It has affinity for free ribosomal 30S subunits but not for 70S ribosomes. The polypeptide is Ribosome maturation factor RimM (Cellvibrio japonicus (strain Ueda107) (Pseudomonas fluorescens subsp. cellulosa)).